Here is a 372-residue protein sequence, read N- to C-terminus: 3-isopropylmalate dehydrogenase (372 aa).

An NAD(+)-binding site is contributed by 79 to 90 (GPKWQGGAVRPE). Residues R97, R107, R136, and D225 each coordinate substrate. Mg(2+) contacts are provided by D225, D250, and D254. 289-300 (GSAPDLPAGKAN) contacts NAD(+).

Belongs to the isocitrate and isopropylmalate dehydrogenases family. In terms of assembly, homodimer. Requires Mg(2+) as cofactor. It depends on Mn(2+) as a cofactor.

It is found in the cytoplasm. The catalysed reaction is (2R,3S)-3-isopropylmalate + NAD(+) = 4-methyl-2-oxopentanoate + CO2 + NADH. It participates in amino-acid biosynthesis; L-leucine biosynthesis; L-leucine from 3-methyl-2-oxobutanoate: step 3/4. Catalyzes the oxidation of 3-carboxy-2-hydroxy-4-methylpentanoate (3-isopropylmalate) to 3-carboxy-4-methyl-2-oxopentanoate. The product decarboxylates to 4-methyl-2 oxopentanoate. The polypeptide is 3-isopropylmalate dehydrogenase (LEU2) (Eremothecium gossypii (strain ATCC 10895 / CBS 109.51 / FGSC 9923 / NRRL Y-1056) (Yeast)).